The following is a 227-amino-acid chain: Cytochrome c oxidase subunit 2 (227 aa).

Residues 1 to 14 are Mitochondrial intermembrane-facing; that stretch reads MAYPLQLGFQDASS. Residues 15–45 form a helical membrane-spanning segment; it reads PIMEELLHFHDHTLMIVFLISSLVLYIISLM. Over 46 to 59 the chain is Mitochondrial matrix; the sequence is LTTKLTHTSTMDAQ. The helical transmembrane segment at 60–87 threads the bilayer; sequence EVETIWTILPAIILILIALPSLRILYMM. Over 88-227 the chain is Mitochondrial intermembrane; that stretch reads DEINNPSLTV…HFENWTTTML (140 aa). Residues His-161, Cys-196, Glu-198, Cys-200, His-204, and Met-207 each coordinate Cu cation. Residue Glu-198 coordinates Mg(2+).

This sequence belongs to the cytochrome c oxidase subunit 2 family. In terms of assembly, component of the cytochrome c oxidase (complex IV, CIV), a multisubunit enzyme composed of 14 subunits. The complex is composed of a catalytic core of 3 subunits MT-CO1, MT-CO2 and MT-CO3, encoded in the mitochondrial DNA, and 11 supernumerary subunits COX4I, COX5A, COX5B, COX6A, COX6B, COX6C, COX7A, COX7B, COX7C, COX8 and NDUFA4, which are encoded in the nuclear genome. The complex exists as a monomer or a dimer and forms supercomplexes (SCs) in the inner mitochondrial membrane with NADH-ubiquinone oxidoreductase (complex I, CI) and ubiquinol-cytochrome c oxidoreductase (cytochrome b-c1 complex, complex III, CIII), resulting in different assemblies (supercomplex SCI(1)III(2)IV(1) and megacomplex MCI(2)III(2)IV(2)). Found in a complex with TMEM177, COA6, COX18, COX20, SCO1 and SCO2. Interacts with TMEM177 in a COX20-dependent manner. Interacts with COX20. Interacts with COX16. The cofactor is Cu cation.

Its subcellular location is the mitochondrion inner membrane. The catalysed reaction is 4 Fe(II)-[cytochrome c] + O2 + 8 H(+)(in) = 4 Fe(III)-[cytochrome c] + 2 H2O + 4 H(+)(out). Component of the cytochrome c oxidase, the last enzyme in the mitochondrial electron transport chain which drives oxidative phosphorylation. The respiratory chain contains 3 multisubunit complexes succinate dehydrogenase (complex II, CII), ubiquinol-cytochrome c oxidoreductase (cytochrome b-c1 complex, complex III, CIII) and cytochrome c oxidase (complex IV, CIV), that cooperate to transfer electrons derived from NADH and succinate to molecular oxygen, creating an electrochemical gradient over the inner membrane that drives transmembrane transport and the ATP synthase. Cytochrome c oxidase is the component of the respiratory chain that catalyzes the reduction of oxygen to water. Electrons originating from reduced cytochrome c in the intermembrane space (IMS) are transferred via the dinuclear copper A center (CU(A)) of subunit 2 and heme A of subunit 1 to the active site in subunit 1, a binuclear center (BNC) formed by heme A3 and copper B (CU(B)). The BNC reduces molecular oxygen to 2 water molecules using 4 electrons from cytochrome c in the IMS and 4 protons from the mitochondrial matrix. The polypeptide is Cytochrome c oxidase subunit 2 (MT-CO2) (Tupaia glis (Common tree shrew)).